Reading from the N-terminus, the 107-residue chain is MRDMLGLMKQAQAMQEKIQQMQAEIERLEVEGQSGGGMVRVTLSAKGQLRNLAIDDQLIKADEKQILEDLIITAHEDARKKAERLMEEKMQGVTAGLALPPGMKLPF.

The protein belongs to the YbaB/EbfC family. As to quaternary structure, homodimer.

Its subcellular location is the cytoplasm. It is found in the nucleoid. In terms of biological role, binds to DNA and alters its conformation. May be involved in regulation of gene expression, nucleoid organization and DNA protection. This is Nucleoid-associated protein Msil_0275 from Methylocella silvestris (strain DSM 15510 / CIP 108128 / LMG 27833 / NCIMB 13906 / BL2).